Consider the following 361-residue polypeptide: Mannose-1-phosphate guanyltransferase (361 aa).

It belongs to the transferase hexapeptide repeat family.

The protein resides in the cytoplasm. It catalyses the reaction alpha-D-mannose 1-phosphate + GTP + H(+) = GDP-alpha-D-mannose + diphosphate. It participates in nucleotide-sugar biosynthesis; GDP-alpha-D-mannose biosynthesis; GDP-alpha-D-mannose from alpha-D-mannose 1-phosphate (GTP route): step 1/1. In terms of biological role, involved in cell wall synthesis where it is required for glycosylation. Involved in cell cycle progression through cell-size checkpoint. This is Mannose-1-phosphate guanyltransferase (MPG1) from Eremothecium gossypii (strain ATCC 10895 / CBS 109.51 / FGSC 9923 / NRRL Y-1056) (Yeast).